The chain runs to 247 residues: MQYNFKVEAFEGPLDLLLHLIHRYEIDIYNIPVAEITEQYLSYVHTMKELQLDVASEYLVMAATLLQIKSKMLLPKHEEDVLDNGDDFIDDPRQELMERLIEYKKYKQVATELKEREQERAQLYTRPPIDFTSLQQEEETNLPLDVTLYDMLAAFQKLMRRKKAEKPVTTRITRQEIPIEQRMTDILKQLEIQGGRQSFYDLFVDDEREIMVVTFLAVLELMKNQQIIIEQEHNFDEIFVSSYTKSA.

The protein belongs to the ScpA family. In terms of assembly, component of a cohesin-like complex composed of ScpA, ScpB and the Smc homodimer, in which ScpA and ScpB bind to the head domain of Smc. The presence of the three proteins is required for the association of the complex with DNA.

Its subcellular location is the cytoplasm. Functionally, participates in chromosomal partition during cell division. May act via the formation of a condensin-like complex containing Smc and ScpB that pull DNA away from mid-cell into both cell halves. The chain is Segregation and condensation protein A from Bacillus anthracis (strain A0248).